Reading from the N-terminus, the 473-residue chain is Chaperone SurA (473 aa).

Residues 1-36 (MTNDRLFAGIARVLSVRPLAAALALLLTLPLIGVQA) form the signal peptide. PpiC domains lie at 214–315 (SLAL…KVIE) and 326–425 (ITQT…QVLE).

Its subcellular location is the periplasm. The catalysed reaction is [protein]-peptidylproline (omega=180) = [protein]-peptidylproline (omega=0). Its function is as follows. Chaperone involved in the correct folding and assembly of outer membrane proteins. Recognizes specific patterns of aromatic residues and the orientation of their side chains, which are found more frequently in integral outer membrane proteins. May act in both early periplasmic and late outer membrane-associated steps of protein maturation. The protein is Chaperone SurA of Polaromonas sp. (strain JS666 / ATCC BAA-500).